The following is a 545-amino-acid chain: CTP synthase (545 aa).

Residues 1–265 are amidoligase domain; the sequence is MSKYIFVTGG…DDLVVQNLGL (265 aa). Position 13 (Ser-13) interacts with CTP. Residue Ser-13 participates in UTP binding. ATP contacts are provided by residues 14–19 and Asp-71; that span reads SLGKGA. Mg(2+)-binding residues include Asp-71 and Glu-139. Residues 146 to 148, 186 to 191, and Lys-222 contribute to the CTP site; these read DIE and KTKPTQ. Residues 186-191 and Lys-222 contribute to the UTP site; that span reads KTKPTQ. The region spanning 290–541 is the Glutamine amidotransferase type-1 domain; the sequence is VIALVGKYVG…MRAAIAQRER (252 aa). Gly-351 lines the L-glutamine pocket. Cys-378 serves as the catalytic Nucleophile; for glutamine hydrolysis. Residues 379–382, Glu-402, and Arg-469 contribute to the L-glutamine site; that span reads LGMQ. Residues His-514 and Glu-516 contribute to the active site.

This sequence belongs to the CTP synthase family. As to quaternary structure, homotetramer.

It catalyses the reaction UTP + L-glutamine + ATP + H2O = CTP + L-glutamate + ADP + phosphate + 2 H(+). The catalysed reaction is L-glutamine + H2O = L-glutamate + NH4(+). The enzyme catalyses UTP + NH4(+) + ATP = CTP + ADP + phosphate + 2 H(+). It functions in the pathway pyrimidine metabolism; CTP biosynthesis via de novo pathway; CTP from UDP: step 2/2. With respect to regulation, allosterically activated by GTP, when glutamine is the substrate; GTP has no effect on the reaction when ammonia is the substrate. The allosteric effector GTP functions by stabilizing the protein conformation that binds the tetrahedral intermediate(s) formed during glutamine hydrolysis. Inhibited by the product CTP, via allosteric rather than competitive inhibition. Its function is as follows. Catalyzes the ATP-dependent amination of UTP to CTP with either L-glutamine or ammonia as the source of nitrogen. Regulates intracellular CTP levels through interactions with the four ribonucleotide triphosphates. The polypeptide is CTP synthase (Acidithiobacillus ferrooxidans (strain ATCC 23270 / DSM 14882 / CIP 104768 / NCIMB 8455) (Ferrobacillus ferrooxidans (strain ATCC 23270))).